The primary structure comprises 178 residues: Large ribosomal subunit protein uL6c (178 aa).

This sequence belongs to the universal ribosomal protein uL6 family. As to quaternary structure, part of the 50S ribosomal subunit.

It localises to the plastid. It is found in the chloroplast. In terms of biological role, binds 23S rRNA. The polypeptide is Large ribosomal subunit protein uL6c (rpl6) (Phaeodactylum tricornutum (strain CCAP 1055/1)).